The sequence spans 494 residues: Anaerobic nitric oxide reductase flavorubredoxin (494 aa).

Residues 30–210 form a zinc metallo-hydrolase region; sequence TKGTSYNSYL…PFSALVTAKI (181 aa). Residues His-79, Glu-81, Asp-83, His-147, Asp-166, and His-227 each coordinate Fe cation. Positions 254–393 constitute a Flavodoxin-like domain; the sequence is ITIFYDSMSN…ECREHGQQIA (140 aa). FMN contacts are provided by residues 260–264 and 342–369; these read SMSNN and AFGSYGWNGGAVDRIHARLTDAGFETAI. Positions 441–492 constitute a Rubredoxin-like domain; the sequence is CQCMVCTVCNWVYDPAKGEPNQGIEVGTTWADVPDYFLCPECHLGKDVFVEY. Fe cation contacts are provided by Cys-446, Cys-449, Cys-479, and Cys-482.

It in the N-terminal section; belongs to the zinc metallo-hydrolase group 3 family. In terms of assembly, homotetramer. Fe cation is required as a cofactor. The cofactor is FMN.

Its subcellular location is the cytoplasm. Its pathway is nitrogen metabolism; nitric oxide reduction. In terms of biological role, anaerobic nitric oxide reductase; uses NADH to detoxify nitric oxide (NO), protecting several 4Fe-4S NO-sensitive enzymes. Has at least 2 reductase partners, only one of which (NorW, flavorubredoxin reductase) has been identified. NO probably binds to the di-iron center; electrons enter from the NorW at rubredoxin and are transferred sequentially to the FMN center and the di-iron center. Also able to function as an aerobic oxygen reductase. This is Anaerobic nitric oxide reductase flavorubredoxin from Vibrio vulnificus (strain YJ016).